The chain runs to 581 residues: Adenine deaminase (581 aa).

The protein belongs to the metallo-dependent hydrolases superfamily. Adenine deaminase family. Requires Mn(2+) as cofactor.

The catalysed reaction is adenine + H2O + H(+) = hypoxanthine + NH4(+). In Clostridium botulinum (strain Eklund 17B / Type B), this protein is Adenine deaminase.